Reading from the N-terminus, the 290-residue chain is HTH-type transcriptional activator RhaR (290 aa).

An HTH araC/xylS-type domain is found at 179–277; the sequence is DLIMSALQQS…GMTPRDYRQR (99 aa). 2 consecutive DNA-binding regions (H-T-H motif) follow at residues 196–217 and 244–267; these read ADFC…RQQT and ISDI…TREA.

In terms of assembly, binds DNA as a dimer.

Its subcellular location is the cytoplasm. Functionally, activates expression of the rhaSR operon in response to L-rhamnose. The protein is HTH-type transcriptional activator RhaR of Yersinia pseudotuberculosis serotype O:1b (strain IP 31758).